The chain runs to 713 residues: U3 small nucleolar RNA-associated protein 8 (713 aa).

T95 carries the post-translational modification Phosphothreonine. A phosphoserine mark is found at S148 and S150.

In terms of assembly, interacts with snoRNA U3. Interacts with MPP10 and UTP25. Component of the ribosomal small subunit (SSU) processome composed of at least 40 protein subunits and snoRNA U3. In the absence of snoRNA3, forms a complex with other t-UTPs. This complex can associate with pre-18S ribosomal RNAs.

The protein resides in the nucleus. It is found in the nucleolus. Its function is as follows. Involved in nucleolar processing of pre-18S ribosomal RNA. Also has a role in nuclear tRNA export. It acts between the steps of tRNA maturation/aminoacylation and its subsequent translocation out of the nucleus. Required for optimal pre-ribosomal RNA transcription by RNA polymerase I together with a subset of U3 proteins required for transcription (t-UTPs). The sequence is that of U3 small nucleolar RNA-associated protein 8 (UTP8) from Saccharomyces cerevisiae (strain ATCC 204508 / S288c) (Baker's yeast).